The primary structure comprises 153 residues: MLKQVQKGFTLIELMIVIAIIGILAAIALPAYQDYVARSQMSEAFNLAGGQKGAVSEYYSDKGVWPADNAAAGIAATVNGKYVNSVVVSAAGTNGVITATMKSTGVAKGVQGKTLALKGTANDGSFSWECSSNADAKYLPSSCRNAATPTPTP.

Positions 1–8 (MLKQVQKG) are cleaved as a propeptide — leader sequence. Phenylalanine 9 is subject to N-methylphenylalanine. Residues 9-29 (FTLIELMIVIAIIGILAAIAL) form a helical membrane-spanning segment. A disulfide bond links cysteine 130 and cysteine 143.

It belongs to the N-Me-Phe pilin family.

The protein resides in the fimbrium. It is found in the membrane. The polypeptide is Fimbrial protein EcpC (ecpC) (Eikenella corrodens).